We begin with the raw amino-acid sequence, 689 residues long: Glycine--tRNA ligase beta subunit (689 aa).

The protein belongs to the class-II aminoacyl-tRNA synthetase family. As to quaternary structure, tetramer of two alpha and two beta subunits.

Its subcellular location is the cytoplasm. The catalysed reaction is tRNA(Gly) + glycine + ATP = glycyl-tRNA(Gly) + AMP + diphosphate. This chain is Glycine--tRNA ligase beta subunit, found in Salmonella paratyphi A (strain ATCC 9150 / SARB42).